The primary structure comprises 732 residues: uncharacterized protein (732 aa).

Disordered stretches follow at residues 38 to 90 (TTLA…NNNK) and 226 to 629 (EESP…MDYQ). Over residues 47–56 (QQQQQQQQQQ) the composition is skewed to low complexity. The segment covering 57-76 (PPSSSTTKEGGATTTQDNKL) has biased composition (polar residues). Low complexity-rich tracts occupy residues 77–89 (TANG…NNNN), 231–247 (TTTT…TTAA), and 254–318 (TTTT…GTNS). Residues 327 to 338 (KAKKGVPKKAPT) are compositionally biased toward basic residues. 3 stretches are compositionally biased toward low complexity: residues 339 to 383 (KKQP…APKT), 401 to 421 (KTSK…STTK), and 487 to 523 (SAST…IKSK). Over residues 553–566 (AAAEEQEEEEEEDN) the composition is skewed to acidic residues. 2 stretches are compositionally biased toward low complexity: residues 567–577 (SNGIQNNNSSN) and 593–609 (DNFS…NGLL). Over residues 610-621 (SEDDDDDDDDDN) the composition is skewed to acidic residues.

This is an uncharacterized protein from Dictyostelium discoideum (Social amoeba).